Reading from the N-terminus, the 3707-residue chain is MGQRAVGSLLLGLLLHARLLAVTHGLRAYDGLSLPEDTETVTASRYGWTYSYLSDDEDLLADDASGDGLGSGDVGSGDFQMVYFRALVNFTRSIEYSPQLEDASAKEFREVSEAVVEKLEPEYRKIPGDQIVSVVFIKELDGWVFVELDVGSEGNADGSQIQEVLHTVVSSGSIGPYVTSPWGFKFRRLGTVPQFPRVCTETEFACHSYNECVALEYRCDRRPDCRDMSDELNCEEPVPELSSSTPAVGKVSPLPLWPEAATTPPPPVTHGPQFLLPSVPGPSACGPQEASCHSGHCIPRDYLCDGQEDCRDGSDELGCASPPPCEPNEFACENGHCALKLWRCDGDFDCEDRTDEANCSVKQPGEVCGPTHFQCVSTNRCIPASFHCDEESDCPDRSDEFGCMPPQVVTPPQQSIQASRGQTVTFTCVATGVPTPIINWRLNWGHIPAHPRVTMTSEGGRGTLIIRDVKEADQGAYTCEAMNSRGMVFGIPDGVLELVPQRGPCPDGHFYLEDSASCLPCFCFGVTNVCQSSLRFRDQIRLSFDQPNDFKGVNVTMPSQPGVPPLSSTQLQIDPALQEFQLVDLSRRFLVHDAFWALPKQFLGNKVDSYGGFLRYKVRYELARGMLEPVQKPDVILVGAGYRLHSRGHTPTHPGTLNQRQVQLSEEHWVHESGRPVQRAEMLQALASLEAVLLQTVYNTKMASVGLSDIVMDTTVTHTTIHGRAHSVEECRCPIGYSGLSCESCDAHFTRVPGGPYLGTCSGCNCNGHASSCDPVYGHCLNCQHNTEGPQCDKCKPGFFGDATKATATACRPCPCPYIDASRRFSDTCFLDTDGQATCDACAPGYTGRRCESCAPGYEGNPIQPGGKCRPTTQEIVRCDERGSLGTSGETCRCKNNVVGRLCNECSDGSFHLSKQNPDGCLKCFCMGVSRQCSSSSWSRAQVLGASEQPSQFSLSNAAGTHTTSEGVSSPAPGELSFSSFHNLLSEPYFWSLPASFRGDKVTSYGGELRFTVMQRPRPSSAPLHRQPLVVLQGNNIVLEHHASRDPSPGQPSNFIVPFQEQAWQRPDGQPATREHLLMALAGIDALLIQASYTQQPAESRLSGISMDVAVPENTGQDSAREVEQCTCPPGYRGPSCQDCDTGYTRVPSGLYLGTCERCNCHGHSETCEPETGACQSCQHHTEGASCEQCQPGYYGDAQRGTPQDCQPCPCYGAPAAGQAAHTCFLDTDGHPTCDSCSPGHSGRHCERCAPGYYGNPSQGQPCHRDGQVPEVLGCGCDPHGSISSQCDAAGQCQCKAQVEGRSCSHCRPHHFHLSASNPEGCLPCFCMGVTQQCASSSYSRQLISTHFAPGDFQGFALVNPQRNSQLTGGFTVEPVHDGARLSFSNFAHLGQESFYWQLPEIYQGDKVAAYGGKLRYTLSYTAGPQGSPLLDPDIQITGNNIMLVASQPALQGPERRSYEIIFREEFWRRPDGQPATREHLLMALADLDELLVRATFSSVPRAASISAVSLEGAQPGPSSGPRALEVEECRCPPGYVGLSCQDCAPGYTRTGSGLYLGQCELCECNGHSDLCHPETGACSRCQHNTAGEFCELCATGYYGDATAGTPEDCQPCACPLTNPENMFSRTCESLGAGGYRCTACEPGYTGQYCEQCAPGYEGDPNVQGGRCQPLTKESLEVQIHPSRSVVPQGGPHSLRCQVSGSPPHYFYWSREDGRPLPSSAQQRHQGSELHFPSVQPSDAGVYICTCRNLIHTSNSRAELLVAEAPSKPIMVTVEEQRSQSVRPGADVTFICTAKSKSPAYTLVWTRLHNGKLPSRAMDFNGILTIRNVQPSDAGTYVCTGSNMFAMDQGTATLHVQVSGTSTAPVASIHPPQLTVQPGQQAEFRCSATGNPTPMLEWIGGPSGQLPAKAQIHNGILRLPAIEPSDQGQYLCRALSSAGQHVARAMLQVHGGSGPRVQVSPERTQVHEGRTVRLYCRAAGVPSASITWRKEGGSLPFRHQAHGSRLRLHHMSVADSGEYVCRANNNIDAQETSIMISVSPSTNSPPAPASPAPIRIESSSSRVAEGQTLDLNCVVPGHAHAQVTWHKRGGSLPTHHQTHGSRLRLYQVSSADSGEYVCSVLSSSGPLEASVLVSITPAAANVHIPGVVPPIRIETSSSRVAEGQTLDLSCVVPGQAHAQVTWHKRGGSLPAGHQVHGHMLRLNRVSPADSGEYSCQVTGSSGTLEASVLVTIEASEPSPIPAPGLAQPVYIESSSSHLTEGQTVDLKCVVPGQAHAQVTWHKRGSSLPARHQTHGSLLRLYQLSPADSGEYVCQVAGSSHPEHEASFKLTVPSSQNSSFRLRSPVISIEPPSSTVQQGQDASFKCLIHEGAMPIKVEWKIRDQELEDNVHISPNGSIITIVAPGPATMEPTACVASNVYGMAQSVVNLSVHGPPTVSVLPEGPVHVKMGKDITLECISSGEPRSSPRWTRLGIPVKLEPRMFGLMNSHAMLKIASVKPSDAGTYVCQAQNALGTAQKQVELIVDTGTVAPGTPQVQVEESELTLEAGHTATLHCSATGNPPPTIHWSKLRAPLPWQHRIEGNTLVIPRVAQQDSGQYICNATNSAGHTEATVVLHVESPPYATIIPEHTSAQPGNLVQLQCLAHGTPPLTYQWSLVGGVLPEKAVVRNQLLRLEPTVPEDSGRYRCQVSNRVGSAEAFAQVLVQGSSSNLPDTSIPGGSTPTVQVTPQLETRNIGASVEFHCAVPNERGTHLRWLKEGGQLPPGHSVQDGVLRIQNLDQNCQGTYVCQAHGPWGQAQATAQLIVQALPSVLINVRTSVHSVVVGHSVEFECLALGDPKPQVTWSKVGGHLRPGIVQSGTIIRIAHVELADAGQYRCAATNAAGTTQSHVLLLVQALPQISTPPEIRVPAGSAAVFPCMASGYPTPAITWSKVDGDLPPDSRLENNMLMLPSVRPEDAGTYVCTATNRQGKVKAFAYLQVPERVIPYFTQTPYSFLPLPTIKDAYRKFEIKITFRPDSADGMLLYNGQKRSPTNLANRQPDFISFGLVGGRPEFRFDAGSGMATIRHPTPLALGQFHTVTLLRSLTQGSLIVGNLAPVNGTSQGKFQGLDLNEELYLGGYPDYGAIPKAGLSSGFVGCVRELRIQGEEIVFHDVNLTTHGISHCPTCQDRPCQNGGQCQDSESSSYTCVCPAGFTAAAVNIRKPCTATPSLWADATCVNRPDGRGYTCRCHLGRSGVRCEEGVTVTTPSMSGAGSYLALPALTNTHHELRLDVEFKPLEPNGILLFSGGKSGPVEDFVSLAMVGGHLEFRYELGSGLAVLRSHEPLALGRWHRVSAERLNKDGSLRVDGGRPVLRSSPGKSQGLNLHTLLYLGGVEPSVQLSPATNMSAHFHGCVGEVSVNGKRLDLTYSFLGSQGVGQCYDSSPCERQPCRNGATCMPAGEYEFQCLCQDGFKGDLCEHEENPCQLHEPCLNGGTCRGARCLCLPGFSGPRCQQGAGYGVVESDWHPEGSGGNDAPGQYGAYFYDNGFLGLPGNSFSRSLPEVPETIEFEVRTSTADGLLLWQGVVREASRSKDFISLGLQDGHLVFSYQLGSGEARLVSGDPINDGEWHRITALREGQRGSIQVDGEDLVTGRSPGPNVAVNTKDIIYIGGAPDVATLTRGKFSSGITGCIKNLVLHTARPGAPPPQPLDLQHRAQAGANTRPCPS.

A signal peptide spans 1 to 21 (MGQRAVGSLLLGLLLHARLLA). Residues serine 65, serine 71, and serine 76 are each glycosylated (O-linked (Xyl...) (heparan sulfate) serine). In terms of domain architecture, SEA spans 80 to 191 (QMVYFRALVN…WGFKFRRLGT (112 aa)). Residue asparagine 89 is glycosylated (N-linked (GlcNAc...) asparagine). LDL-receptor class A domains lie at 195-234 (FPRVCTETEFACHSYNECVALEYRCDRRPDCRDMSDELNC), 281-319 (GPSACGPQEASCHSGHCIPRDYLCDGQEDCRDGSDELGC), 320-359 (ASPPPCEPNEFACENGHCALKLWRCDGDFDCEDRTDEANC), and 360-403 (SVKQ…EFGC). 13 disulfides stabilise this stretch: cysteine 199–cysteine 212, cysteine 206–cysteine 225, cysteine 219–cysteine 234, cysteine 285–cysteine 297, cysteine 292–cysteine 310, cysteine 304–cysteine 319, cysteine 325–cysteine 337, cysteine 332–cysteine 350, cysteine 344–cysteine 359, cysteine 368–cysteine 381, cysteine 375–cysteine 394, cysteine 388–cysteine 403, and cysteine 428–cysteine 479. Asparagine 358 is a glycosylation site (N-linked (GlcNAc...) asparagine). The 101-residue stretch at 404–504 (MPPQVVTPPQ…VLELVPQRGP (101 aa)) folds into the Ig-like C2-type 1 domain. The region spanning 521–530 (CFCFGVTNVC) is the Laminin EGF-like 1; first part domain. The 193-residue stretch at 538-730 (DQIRLSFDQP…IHGRAHSVEE (193 aa)) folds into the Laminin IV type A 1 domain. The N-linked (GlcNAc...) asparagine glycan is linked to asparagine 554. The Laminin EGF-like 1; second part domain occupies 731–763 (CRCPIGYSGLSCESCDAHFTRVPGGPYLGTCSG). Intrachain disulfides connect cysteine 764-cysteine 773, cysteine 766-cysteine 780, cysteine 783-cysteine 792, cysteine 795-cysteine 811, cysteine 814-cysteine 829, cysteine 816-cysteine 839, cysteine 842-cysteine 851, cysteine 854-cysteine 869, cysteine 879-cysteine 892, cysteine 894-cysteine 903, and cysteine 906-cysteine 921. Laminin EGF-like domains follow at residues 764–813 (CNCN…ACRP) and 814–871 (CPCP…KCRP). The Laminin EGF-like 4; truncated domain occupies 879 to 923 (CDERGSLGTSGETCRCKNNVVGRLCNECSDGSFHLSKQNPDGCLK). The 10-residue stretch at 924 to 933 (CFCMGVSRQC) folds into the Laminin EGF-like 5; first part domain. Residues 941–1125 (AQVLGASEQP…GQDSAREVEQ (185 aa)) form the Laminin IV type A 2 domain. The Laminin EGF-like 5; second part domain maps to 1126 to 1158 (CTCPPGYRGPSCQDCDTGYTRVPSGLYLGTCER). 12 disulfide bridges follow: cysteine 1159–cysteine 1168, cysteine 1161–cysteine 1175, cysteine 1178–cysteine 1187, cysteine 1190–cysteine 1206, cysteine 1209–cysteine 1224, cysteine 1211–cysteine 1234, cysteine 1237–cysteine 1246, cysteine 1249–cysteine 1263, cysteine 1275–cysteine 1287, cysteine 1277–cysteine 1293, cysteine 1295–cysteine 1304, and cysteine 1307–cysteine 1322. Laminin EGF-like domains lie at 1159 to 1208 (CNCH…DCQP), 1209 to 1265 (CPCY…PCHR), and 1275 to 1324 (CGCD…GCLP). The 10-residue stretch at 1325–1334 (CFCMGVTQQC) folds into the Laminin EGF-like 9; first part domain. The Laminin IV type A 3 domain occupies 1344 to 1529 (ISTHFAPGDF…SGPRALEVEE (186 aa)). The region spanning 1530–1562 (CRCPPGYVGLSCQDCAPGYTRTGSGLYLGQCEL) is the Laminin EGF-like 9; second part domain. Intrachain disulfides connect cysteine 1563–cysteine 1572, cysteine 1565–cysteine 1579, cysteine 1582–cysteine 1591, cysteine 1594–cysteine 1610, cysteine 1613–cysteine 1628, cysteine 1615–cysteine 1638, cysteine 1641–cysteine 1650, and cysteine 1653–cysteine 1668. 2 Laminin EGF-like domains span residues 1563-1612 (CECN…DCQP) and 1613-1670 (CACP…RCQP). 14 consecutive Ig-like C2-type domains span residues 1677–1771 (EVQI…KPIM), 1772–1865 (VTVE…STAP), 1866–1954 (VASI…GGSG), 1955–2049 (PRVQ…PAPA), 2050–2148 (SPAP…PGVV), 2149–2244 (PPIR…PAPG), 2245–2343 (LAQP…RLRS), 2344–2436 (PVIS…PPTV), 2437–2532 (SVLP…APGT), 2533–2619 (PQVQ…VESP), 2620–2720 (PYAT…GGST), 2721–2809 (PTVQ…ALPS), 2810–2895 (VLIN…LVQA), and 2896–2980 (LPQI…LQVP). Positions 1713 to 1733 (DGRPLPSSAQQRHQGSELHFP) are disordered. 3 disulfide bridges follow: cysteine 1792–cysteine 1839, cysteine 1886–cysteine 1932, and cysteine 1976–cysteine 2021. The tract at residues 2039 to 2061 (SPSTNSPPAPASPAPIRIESSSS) is disordered. Positions 2052 to 2061 (APIRIESSSS) are enriched in low complexity. 3 cysteine pairs are disulfide-bonded: cysteine 2073-cysteine 2118, cysteine 2170-cysteine 2215, and cysteine 2268-cysteine 2313. N-linked (GlcNAc...) asparagine glycans are attached at residues asparagine 2336, asparagine 2394, and asparagine 2427. Residues cysteine 2365 and cysteine 2413 are joined by a disulfide bond. Disulfide bonds link cysteine 2456–cysteine 2506 and cysteine 2554–cysteine 2599. Residue asparagine 2600 is glycosylated (N-linked (GlcNAc...) asparagine). Cysteines 2641 and 2686 form a disulfide. 2 cysteine pairs are disulfide-bonded: cysteine 2831-cysteine 2876 and cysteine 2917-cysteine 2962. Positions 2984–3162 (IPYFTQTPYS…VNLTTHGISH (179 aa)) constitute a Laminin G-like 1 domain. N-linked (GlcNAc...) asparagine glycans are attached at residues asparagine 3098 and asparagine 3154. 5 disulfides stabilise this stretch: cysteine 3137-cysteine 3163, cysteine 3166-cysteine 3177, cysteine 3171-cysteine 3187, cysteine 3204-cysteine 3216, and cysteine 3229-cysteine 3238. In terms of domain architecture, EGF-like spans 3163–3241 (CPTCQDRPCQ…GRSGVRCEEG (79 aa)). The region spanning 3245 to 3425 (TTPSMSGAGS…VGQCYDSSPC (181 aa)) is the Laminin G-like 2 domain. Asparagine 3385 carries N-linked (GlcNAc...) asparagine glycosylation. Cystine bridges form between cysteine 3393–cysteine 3419, cysteine 3425–cysteine 3436, cysteine 3430–cysteine 3446, cysteine 3448–cysteine 3457, cysteine 3464–cysteine 3476, cysteine 3470–cysteine 3481, and cysteine 3483–cysteine 3492. Serine 3510 carries O-linked (Xyl...) (chondroitin sulfate) serine glycosylation. In terms of domain architecture, Laminin G-like 3 spans 3518 to 3705 (QYGAYFYDNG…AQAGANTRPC (188 aa)). Positions 3574 and 3591 each coordinate Ca(2+). Residues 3615-3617 (LRE) are mediates motor neuron attachment. Positions 3641 and 3643 each coordinate Ca(2+). Residues cysteine 3671 and cysteine 3705 are joined by a disulfide bond. The tract at residues 3680–3707 (ARPGAPPPQPLDLQHRAQAGANTRPCPS) is disordered.

Has a strong tendency to aggregate in dimers or stellate structures. Interacts with other basement membrane components such as laminin, prolargin and collagen type IV. Interacts with COL13A1. Interacts with FGFBP1. Interacts with VWA1. Interacts (via C-terminus) with ECM1 (via C-terminus). Interacts with SVEP1. In terms of processing, proteolytic processing produces the C-terminal angiogenic peptide, endorepellin. This peptide can be further processed to produce the LG3 peptide. Post-translationally, O-glycosylated. Contains three heparan sulfate chains. Also contains chondroitin sulfate.

Its subcellular location is the secreted. It localises to the extracellular space. The protein resides in the extracellular matrix. The protein localises to the basement membrane. Functionally, integral component of basement membranes. Component of the glomerular basement membrane (GBM), responsible for the fixed negative electrostatic membrane charge, and which provides a barrier which is both size- and charge-selective. It serves as an attachment substrate for cells. Plays essential roles in vascularization. Critical for normal heart development and for regulating the vascular response to injury. Also required for avascular cartilage development. Its function is as follows. Anti-angiogenic and anti-tumor peptide that inhibits endothelial cell migration, collagen-induced endothelial tube morphogenesis and blood vessel growth in the chorioallantoic membrane. Blocks endothelial cell adhesion to fibronectin and type I collagen. Anti-tumor agent in neovascularization. Interaction with its ligand, integrin alpha2/beta1, is required for the anti-angiogenic properties. Evokes a reduction in phosphorylation of receptor tyrosine kinases via alpha2/beta1 integrin-mediated activation of the tyrosine phosphatase, PTPN6. In terms of biological role, has anti-angiogenic properties that require binding of calcium ions for full activity. This Mus musculus (Mouse) protein is Basement membrane-specific heparan sulfate proteoglycan core protein (Hspg2).